We begin with the raw amino-acid sequence, 617 residues long: Protein 4.1 (617 aa).

Residues 1-282 (MHCKVSLLDD…EHHTFFRLTS (282 aa)) enclose the FERM domain. The residue at position 13 (tyrosine 13) is a Phosphotyrosine. Threonine 169 carries the post-translational modification Phosphothreonine. The interval 308-401 (TRQASALIDR…AEPEPSEAWK (94 aa)) is disordered. Phosphoserine occurs at positions 312, 331, and 333. Over residues 348 to 361 (RPTSAPAIAPSPAA) the composition is skewed to low complexity. Positions 387-396 (APPEDAEPEP) are enriched in acidic residues. Residues 401-466 (KKKRERLDGE…WDKRLSTHSP (66 aa)) are spectrin--actin-binding. Tyrosine 413 is modified (phosphotyrosine; by EGFR). A phosphoserine mark is found at serine 417, serine 427, serine 437, and serine 462. Serine 465 carries the phosphoserine; by CDK1 modification. The tract at residues 467 to 617 (FRTLNINGQI…VHQETEISEE (151 aa)) is C-terminal (CTD). Phosphothreonine occurs at positions 489 and 612.

In terms of assembly, binds with a high affinity to glycophorin and with lower affinity to band III protein. Associates with the nuclear mitotic apparatus. Binds calmodulin, CPAP and DLG1. Also found to associate with contractile apparatus and tight junctions. Interacts with NUMA1; this interaction is negatively regulated by CDK1 during metaphase and promotes anaphase-specific localization of NUMA1 in symmetrically dividing cells. Interacts with ATP2B1; regulates small intestinal calcium absorption through regulation of membrane expression of ATP2B1. In terms of processing, phosphorylated at multiple sites by different protein kinases and each phosphorylation event selectively modulates the protein's functions. Phosphorylation on Tyr-413 reduces the ability of 4.1 to promote the assembly of the spectrin/actin/4.1 ternary complex.

It localises to the nucleus. The protein resides in the cytoplasm. Its subcellular location is the cytoskeleton. The protein localises to the cell cortex. Its function is as follows. Protein 4.1 is a major structural element of the erythrocyte membrane skeleton. It plays a key role in regulating membrane physical properties of mechanical stability and deformability by stabilizing spectrin-actin interaction. Recruits DLG1 to membranes. Required for dynein-dynactin complex and NUMA1 recruitment at the mitotic cell cortex during anaphase. In Bos taurus (Bovine), this protein is Protein 4.1.